The primary structure comprises 75 residues: Peptide Ctri10036 (75 aa).

The N-terminal stretch at 1–22 (MNSKYLFVFLILNVIFIDLCQG) is a signal peptide. K41 is subject to Lysine amide. A propeptide spanning residues 47-75 (ELGSQYDYLQDFRKRELDLDDLLSKFPDY) is cleaved from the precursor.

This sequence belongs to the non-disulfide-bridged peptide (NDBP) superfamily. Short antimicrobial peptide (group 4) family. Expressed by the venom gland.

Its subcellular location is the secreted. This is Peptide Ctri10036 from Chaerilus tricostatus (Scorpion).